The primary structure comprises 942 residues: ATP-dependent RNA helicase DDX42 (942 aa).

A compositionally biased stretch (gly residues) spans 1–18 (MNWNKGGPGTKRGFGFGG). A disordered region spans residues 1-114 (MNWNKGGPGT…KPIDSDSDDD (114 aa)). Lys5 bears the N6-acetyllysine mark. Arg12 bears the Omega-N-methylarginine mark. The segment covering 35-52 (SHSAFGATSSSSGFGKSA) has biased composition (low complexity). Residue Ser58 is modified to Phosphoserine. The segment covering 70–84 (DEENAYFEDEEEDSS) has biased composition (acidic residues). Ser96, Ser104, Ser109, and Ser111 each carry phosphoserine. Positions 116-157 (LEAFMAEVEDQAARDMKRLEEKDKERKNVKGIRDDIEEEDDQ) form a coiled coil. The interval 182-203 (EYDSDGNPIAPTKKIIDPLPPI) is disordered. Ser185 bears the Phosphoserine mark. Residues 253–281 (SSFAHFGFDEQLMHQIRKSEYTQPTPIQC) carry the Q motif motif. In terms of domain architecture, Helicase ATP-binding spans 284 to 459 (VPVALSGRDM…RDILIDPIRV (176 aa)). 297-304 (AKTGSGKT) serves as a coordination point for ATP. Residues 407-410 (DEAD) carry the DEAD box motif. The 146-residue stretch at 487 to 632 (WLTRRLVEFT…HVSKELLDLA (146 aa)) folds into the Helicase C-terminal domain. 2 stretches are compositionally biased toward polar residues: residues 737-760 (LNSVPTNSAQQGHNSPDSPITSAT) and 786-798 (GVNNTASGNNSRE). Disordered regions lie at residues 737-762 (LNSVPTNSAQQGHNSPDSPITSATKG) and 783-942 (GAQG…RWDS). A necessary for interaction with TP53BP2 region spans residues 738-833 (NSVPTNSAQQ…TGNRHSDSPR (96 aa)). Position 754 is a phosphoserine (Ser754). Basic and acidic residues predominate over residues 820 to 924 (SHGETGNRHS…KVDSKTDKTA (105 aa)). Residue Lys899 forms a Glycyl lysine isopeptide (Lys-Gly) (interchain with G-Cter in SUMO2) linkage.

It belongs to the DEAD box helicase family. DDX42 subfamily. In terms of assembly, transient component of the SF3B subcomplex of the 17S U2 SnRNP complex. Interacts (via the C-terminus) with TP53BP2; the interaction is not inhibitied by TP53BP2 ubiquitination and is independent of p53/TP53.

The protein localises to the cytoplasm. It is found in the nucleus. It catalyses the reaction ATP + H2O = ADP + phosphate + H(+). ATP-dependent RNA helicase that binds to partially double-stranded RNAs (dsRNAs) in order to unwind RNA secondary structures. Unwinding is promoted in the presence of single-strand binding proteins. Also mediates RNA duplex formation thereby displacing the single-strand RNA binding protein. ATP and ADP modulate its activity: ATP binding and hydrolysis by DDX42 triggers RNA strand separation, whereas the ADP-bound form of the protein triggers annealing of complementary RNA strands. Required for assembly of the 17S U2 SnRNP complex of the spliceosome, a large ribonucleoprotein complex that removes introns from transcribed pre-mRNAs: DDX42 associates transiently with the SF3B subcomplex of the 17S U2 SnRNP complex and is released after fulfilling its role in the assembly of 17S U2 SnRNP. Involved in the survival of cells by interacting with TP53BP2 and thereby counteracting the apoptosis-stimulating activity of TP53BP2. Relocalizes TP53BP2 to the cytoplasm. The chain is ATP-dependent RNA helicase DDX42 (DDX42) from Pongo abelii (Sumatran orangutan).